The sequence spans 555 residues: Cytochrome P450 monooxygeanse terQ (555 aa).

The chain crosses the membrane as a helical span at residues 10 to 30; sequence VPAHAWPTITVAGAVMVVVLL. Heme is bound at residue Cys479. The interval 535-555 is disordered; the sequence is DAGNTARVDPGAPDGVASEPS.

This sequence belongs to the cytochrome P450 family. It depends on heme as a cofactor.

Its subcellular location is the membrane. It functions in the pathway secondary metabolite biosynthesis. Functionally, cytochrome P450 monooxygeanse; part of the gene cluster that mediates the biosynthesis of terpendoles, indole-diterpene (IDT) mycotoxins including terpendole I, terpendole K, terpendole C, as well as the kinesin Eg5 inhibitor terpendole E. TerQ is a C11-hydroxylating enzyme that converts paspalline into terpendole E. Is also able to hydroxylate 13-desoxyterpendole I at C-13 to produce terpendole I. Terpendoles biosynthesis begins with the synthesis of geranylgeranyl diphosphate (GGPP) by a yet unidentified GGPP synthase. Condensation of indole-3-glycerol phosphate with GGPP by the prenyltransferase terC then forms 3-geranylgeranylindole (3-GGI), followed by epoxidation and cyclization of this intermediate (by the FAD-dependent monooxygeanse terM and the terpene cyclase terB) to form paspaline. The cytochrome monooxygenase terQ then hydroxylates paspalline at C-11 to yield terpendole E. The cytochrome monooxygenase terP converts terpendole E to 13-desoxyterpendole I, and terQ converts 13-desoxyterpendole I into terpendole I. TerF and terK are required for conversion of terpendole I to terpendole C which is further converted to terpendole K. This Tolypocladium album (Soil fungus) protein is Cytochrome P450 monooxygeanse terQ.